The following is a 335-amino-acid chain: Tryptophan--tRNA ligase (335 aa).

Residues 19 to 21 (QPS) and 28 to 29 (GN) contribute to the ATP site. Positions 20–29 (PSSGMLHLGN) match the 'HIGH' region motif. D143 is an L-tryptophan binding site. ATP contacts are provided by residues 155–157 (GAD), I192, and 201–205 (KMSKS). Positions 201–205 (KMSKS) match the 'KMSKS' region motif.

Belongs to the class-I aminoacyl-tRNA synthetase family. Homodimer.

Its subcellular location is the cytoplasm. It carries out the reaction tRNA(Trp) + L-tryptophan + ATP = L-tryptophyl-tRNA(Trp) + AMP + diphosphate + H(+). In terms of biological role, catalyzes the attachment of tryptophan to tRNA(Trp). This chain is Tryptophan--tRNA ligase, found in Tropheryma whipplei (strain TW08/27) (Whipple's bacillus).